Here is a 465-residue protein sequence, read N- to C-terminus: Siroheme synthase (465 aa).

The segment at 1–203 is precorrin-2 dehydrogenase /sirohydrochlorin ferrochelatase; sequence MDFLPLFHSL…GRPAEAERLL (203 aa). Residues 22 to 23 and 43 to 44 contribute to the NAD(+) site; these read EV and PQ. Phosphoserine is present on Ser128. A uroporphyrinogen-III C-methyltransferase region spans residues 217–465; the sequence is GEVYLVGAGP…AWFEGAREGA (249 aa). Pro226 provides a ligand contact to S-adenosyl-L-methionine. Asp249 serves as the catalytic Proton acceptor. Lys271 (proton donor) is an active-site residue. S-adenosyl-L-methionine-binding positions include 302-304, Ile307, 332-333, Met384, and Gly413; these read GGD and TA.

In the N-terminal section; belongs to the precorrin-2 dehydrogenase / sirohydrochlorin ferrochelatase family. This sequence in the C-terminal section; belongs to the precorrin methyltransferase family.

The catalysed reaction is uroporphyrinogen III + 2 S-adenosyl-L-methionine = precorrin-2 + 2 S-adenosyl-L-homocysteine + H(+). It catalyses the reaction precorrin-2 + NAD(+) = sirohydrochlorin + NADH + 2 H(+). The enzyme catalyses siroheme + 2 H(+) = sirohydrochlorin + Fe(2+). It participates in cofactor biosynthesis; adenosylcobalamin biosynthesis; precorrin-2 from uroporphyrinogen III: step 1/1. Its pathway is cofactor biosynthesis; adenosylcobalamin biosynthesis; sirohydrochlorin from precorrin-2: step 1/1. The protein operates within porphyrin-containing compound metabolism; siroheme biosynthesis; precorrin-2 from uroporphyrinogen III: step 1/1. It functions in the pathway porphyrin-containing compound metabolism; siroheme biosynthesis; siroheme from sirohydrochlorin: step 1/1. It participates in porphyrin-containing compound metabolism; siroheme biosynthesis; sirohydrochlorin from precorrin-2: step 1/1. Its function is as follows. Multifunctional enzyme that catalyzes the SAM-dependent methylations of uroporphyrinogen III at position C-2 and C-7 to form precorrin-2 via precorrin-1. Then it catalyzes the NAD-dependent ring dehydrogenation of precorrin-2 to yield sirohydrochlorin. Finally, it catalyzes the ferrochelation of sirohydrochlorin to yield siroheme. This chain is Siroheme synthase, found in Pseudomonas paraeruginosa (strain DSM 24068 / PA7) (Pseudomonas aeruginosa (strain PA7)).